We begin with the raw amino-acid sequence, 523 residues long: Sensory neuron membrane protein 1 (523 aa).

The Cytoplasmic segment spans residues 1-11; that stretch reads MQLPKELKYAA. The helical transmembrane segment at 12-32 threads the bilayer; it reads IAGGVALFGLIFGWVLFPTIL. At 33–458 the chain is on the extracellular side; the sequence is KSQLKKEMAL…HQLFIPKRVV (426 aa). Asn-67 and Asn-229 each carry an N-linked (GlcNAc...) asparagine glycan. Cystine bridges form between Cys-268-Cys-333, Cys-297-Cys-352, and Cys-335-Cys-341. N-linked (GlcNAc...) asparagine glycosylation occurs at Asn-440. Residues 459-479 form a helical membrane-spanning segment; that stretch reads GVLRWWVVSFGSLGAVIGIVF. Topologically, residues 480–523 are cytoplasmic; it reads HFRDHIMRLAVSGDTKVSKVTPEEPEQKDISVIGQAQEPAKVNI.

It belongs to the CD36 family. Detected in sensory neurons in the antenna.

Its subcellular location is the cell membrane. In terms of biological role, plays an olfactory role that is not restricted to pheromone sensitivity. In Heliothis virescens (Tobacco budworm moth), this protein is Sensory neuron membrane protein 1.